Consider the following 386-residue polypeptide: Protein phosphatase methylesterase 1 (386 aa).

Residues 1-38 (MSALEKSMHLGRLPSRPPLPGSGGSQSGAKMRMGPGRK) are disordered. Serine 15 carries the phosphoserine modification. Arginine 16 is subject to Asymmetric dimethylarginine; alternate. Arginine 16 bears the Omega-N-methylarginine; alternate mark. Serine 156 is a catalytic residue. Residues 255–265 (IEEEEEDEEGS) are compositionally biased toward acidic residues. Residues 255–280 (IEEEEEDEEGSESVNKRKKEDDMETK) form a disordered region. The span at 268–280 (VNKRKKEDDMETK) shows a compositional bias: basic and acidic residues. Residue histidine 349 is part of the active site.

It belongs to the AB hydrolase superfamily. In terms of assembly, binds PPP2CA and PPP2CB. Phosphorylated by SIK1 following increases in intracellular sodium, leading to dissociation from the protein phosphatase 2A (PP2A) complex and subsequent dephosphorylation of sodium/potassium-transporting ATPase ATP1A1.

It carries out the reaction [phosphatase 2A protein]-C-terminal L-leucine methyl ester + H2O = [phosphatase 2A protein]-C-terminal L-leucine + methanol + H(+). In terms of biological role, demethylates proteins that have been reversibly carboxymethylated. Demethylates PPP2CB (in vitro) and PPP2CA. Binding to PPP2CA displaces the manganese ion and inactivates the enzyme. The protein is Protein phosphatase methylesterase 1 (Ppme1) of Rattus norvegicus (Rat).